The primary structure comprises 30 residues: Ribonuclease pancreatic (30 aa).

The segment covering 1-13 has biased composition (basic and acidic residues); sequence KETAAAKFERQHM. A disordered region spans residues 1–21; the sequence is KETAAAKFERQHMDPAPAAAX. Substrate-binding residues include Lys7 and Arg10. His12 functions as the Proton acceptor in the catalytic mechanism.

The protein belongs to the pancreatic ribonuclease family. In terms of assembly, monomer. Interacts with and forms tight 1:1 complexes with RNH1. Dimerization of two such complexes may occur. Interaction with RNH1 inhibits this protein. Pancreas.

The protein localises to the secreted. The catalysed reaction is an [RNA] containing cytidine + H2O = an [RNA]-3'-cytidine-3'-phosphate + a 5'-hydroxy-ribonucleotide-3'-[RNA].. The enzyme catalyses an [RNA] containing uridine + H2O = an [RNA]-3'-uridine-3'-phosphate + a 5'-hydroxy-ribonucleotide-3'-[RNA].. In terms of biological role, endonuclease that catalyzes the cleavage of RNA on the 3' side of pyrimidine nucleotides. Acts on single-stranded and double-stranded RNA. The protein is Ribonuclease pancreatic (RNASE1) of Odocoileus virginianus virginianus (Virginia white-tailed deer).